The sequence spans 285 residues: MKYIGAHVSAAGGLANAPARAAEIGATAFALFTKNQRQWRAAPLTPQVIDDFKIACEKYHFSAAQILPHDSYLINLGHPVSEALEKSRDAFLDEMQRCEQLGLTLLNFHPGSHLMQIAQEDCLARIAESINIALAQTEGVTAVIENTAGQGSNLGFEFEQLAAIIDGVEDKSRVGVCIDTCHAFAAGYDLRTPEACEKTFAEFGKIVGFQYLRGMHLNDAKSAFGSRVDRHHSLGEGNIGHDAFRWIMQDARFDGIPLILETINPDIWAEEIAWLKAQQIAEAVA.

Positions 69, 109, 145, 179, 182, 216, 229, 231, and 261 each coordinate Zn(2+).

This sequence belongs to the AP endonuclease 2 family. Zn(2+) is required as a cofactor.

The catalysed reaction is Endonucleolytic cleavage to 5'-phosphooligonucleotide end-products.. Functionally, endonuclease IV plays a role in DNA repair. It cleaves phosphodiester bonds at apurinic or apyrimidinic (AP) sites, generating a 3'-hydroxyl group and a 5'-terminal sugar phosphate. The sequence is that of Probable endonuclease 4 from Salmonella heidelberg (strain SL476).